The primary structure comprises 92 residues: Large ribosomal subunit protein eL43A (92 aa).

A C4-type zinc finger spans residues 39 to 60; it reads CSFCGKKTVKRGAAGIWTCSCC. Phosphoserine is present on serine 40.

The protein belongs to the eukaryotic ribosomal protein eL43 family. In terms of assembly, component of the large ribosomal subunit (LSU). Mature yeast ribosomes consist of a small (40S) and a large (60S) subunit. The 40S small subunit contains 1 molecule of ribosomal RNA (18S rRNA) and 33 different proteins (encoded by 57 genes). The large 60S subunit contains 3 rRNA molecules (25S, 5.8S and 5S rRNA) and 46 different proteins (encoded by 81 genes).

Its subcellular location is the cytoplasm. Its function is as follows. Component of the ribosome, a large ribonucleoprotein complex responsible for the synthesis of proteins in the cell. The small ribosomal subunit (SSU) binds messenger RNAs (mRNAs) and translates the encoded message by selecting cognate aminoacyl-transfer RNA (tRNA) molecules. The large subunit (LSU) contains the ribosomal catalytic site termed the peptidyl transferase center (PTC), which catalyzes the formation of peptide bonds, thereby polymerizing the amino acids delivered by tRNAs into a polypeptide chain. The nascent polypeptides leave the ribosome through a tunnel in the LSU and interact with protein factors that function in enzymatic processing, targeting, and the membrane insertion of nascent chains at the exit of the ribosomal tunnel. The polypeptide is Large ribosomal subunit protein eL43A (Saccharomyces cerevisiae (strain ATCC 204508 / S288c) (Baker's yeast)).